Here is a 331-residue protein sequence, read N- to C-terminus: MSWLTPALVTIILTVVKAIVVLLAVVICGALLSWVERRLLGLWQDRYGPNRVGPFGAFQLGADMIKMFFKEDWTPPFADKMIFTLAPVIAMGALLVAFAIVPITPTWGVADLNIGILFFFAMAGLTVYAVLFAGWSSNNKFALLGSLRASAQTISYEVFLALSLMGIVAQVGSFNMRDIVQYQIDNVWFIIPQFFGFCTFIIAGVAVTHRHPFDQPEAEQELADGYHIEYAGMKWGMFFVGEYIGIVLVSALLATLFFGGWHGPFLDTLPWLSFFYFAAKTGFFIMLFILIRASLPRPRYDQVMAFSWKVCLPLTLINLLVTGALVLAAAQ.

The next 8 helical transmembrane spans lie at 7 to 27 (ALVT…AVVI), 81 to 101 (MIFT…FAIV), 114 to 134 (IGIL…LFAG), 154 to 174 (ISYE…VGSF), 187 to 207 (VWFI…GVAV), 238 to 258 (FFVG…TLFF), 271 to 291 (WLSF…FILI), and 310 to 330 (VCLP…LAAA).

Belongs to the complex I subunit 1 family. As to quaternary structure, NDH-1 is composed of 13 different subunits. Subunits NuoA, H, J, K, L, M, N constitute the membrane sector of the complex.

Its subcellular location is the cell inner membrane. It carries out the reaction a quinone + NADH + 5 H(+)(in) = a quinol + NAD(+) + 4 H(+)(out). Functionally, NDH-1 shuttles electrons from NADH, via FMN and iron-sulfur (Fe-S) centers, to quinones in the respiratory chain. The immediate electron acceptor for the enzyme in this species is believed to be ubiquinone. Couples the redox reaction to proton translocation (for every two electrons transferred, four hydrogen ions are translocated across the cytoplasmic membrane), and thus conserves the redox energy in a proton gradient. This subunit may bind ubiquinone. This is NADH-quinone oxidoreductase subunit H from Pseudomonas paraeruginosa (strain DSM 24068 / PA7) (Pseudomonas aeruginosa (strain PA7)).